A 1341-amino-acid chain; its full sequence is WASH complex subunit 2A (1341 aa).

The interval 1–220 (MMNRTTPDQE…VGSDRGSIVD (220 aa)) is sufficient for interaction with WASHC3, WASHC4 and WASHC5; required for interaction with WASHC1. Over residues 202-214 (GELSSEEGSVGSD) the composition is skewed to low complexity. A disordered region spans residues 202-405 (GELSSEEGSV…SSSKPGKKIP (204 aa)). Residues 220–232 (DTEEEKEEEESDE) are compositionally biased toward acidic residues. The span at 233-244 (DFAHHSDNEQNR) shows a compositional bias: basic and acidic residues. Acidic residues-rich tracts occupy residues 250-259 (SDEEEDDDGC) and 266-276 (EKEEEDIEDIE). Over residues 293-307 (LAARIKGDAVGRVDE) the composition is skewed to basic and acidic residues. The span at 355-366 (GSGGGLFSGGKG) shows a compositional bias: gly residues. Residues 356 to 600 (SGGGLFSGGK…QTLCLQAQRE (245 aa)) form a sufficient for interaction with CCDC93 region. The interval 356–742 (SGGGLFSGGK…KEAQLGVKSV (387 aa)) is required for interaction with CCDC22 and VPS35L. The segment at 357-1341 (GGGLFSGGKG…DDPLNAFGGQ (985 aa)) is interaction with VPS35. 4 consecutive short sequence motifs (LFa) follow at residues 367-378 (LFDDEDEESDLF), 411-419 (VFLGDTDVF), 450-463 (LFDDDDGDDDDDFF), and 482-491 (IFGDEEGDLF). The disordered stretch occupies residues 422–554 (ASVPSMKEPQ…EDLFSSQSAS (133 aa)). Positions 451 to 462 (FDDDDGDDDDDF) are enriched in acidic residues. Residues 507 to 517 (DENKARAEKKV) show a composition bias toward basic and acidic residues. Positions 518-536 (TLSSSKNLKPSSETKTQKG) are enriched in polar residues. 3 consecutive short sequence motifs (LFa) follow at residues 537 to 548 (LFSDEEDSEDLF), 572 to 583 (LFDDEDEEDNLF), and 617 to 629 (LFSSDEEDQWNIP). Serine 539 carries the phosphoserine modification. Disordered regions lie at residues 621-664 (DEED…KTSL), 696-739 (DSGG…QLGV), and 751-838 (ESLK…KSTG). Residues 637 to 647 (SDSRSKGEPRD) show a composition bias toward basic and acidic residues. 3 consecutive short sequence motifs (LFa) follow at residues 664 to 674 (LFEEDEEDDLF), 690 to 702 (LFEDDVDSGGSLF), and 726 to 738 (LFSDEEEKEAQLG). A compositionally biased stretch (basic and acidic residues) spans 751–768 (ESLKFGRTDVAESEKEGL). The LFa 11 motif lies at 803–817 (LFDEEEDKMEDQNII). The segment covering 823–834 (EVGKGRDPDAHP) has biased composition (basic and acidic residues). Short sequence motifs (LFa) lie at residues 839 to 847 (VFQDEELLF), 856 to 862 (DPDVDLF), and 878 to 888 (LFGDDEDDDLF). Disordered stretches follow at residues 881–951 (DDED…KEPS) and 988–1205 (FPSS…LEDE). 2 stretches are compositionally biased toward basic and acidic residues: residues 898 to 911 (QEKKRVVKKDHSVD) and 917 to 931 (KHPESIQGSKEKGIW). The tract at residues 937-1341 (QDSSGLAPFK…DDPLNAFGGQ (405 aa)) is interaction with phospholipids. Over residues 1028–1046 (NKSRVKMRGKRRPQTRAAR) the composition is skewed to basic residues. The segment at 1029–1047 (KSRVKMRGKRRPQTRAARR) is required for interaction with F-actin-capping protein subunit alpha (CAPZA1 or CAPZA2 or CAPZA3). 2 positions are modified to phosphoserine: serine 1054 and serine 1087. A compositionally biased stretch (low complexity) spans 1094–1110 (EALAAAAAPWEGGPVPG). Phosphoserine is present on serine 1114. 6 consecutive short sequence motifs (LFa) follow at residues 1129 to 1136 (LFDSGDIF), 1171 to 1185 (MFPALGEASSDDDLF), 1201 to 1209 (LLEDEDDLF), 1234 to 1240 (IFEDDIF), 1262 to 1270 (LFDDNIDIF), and 1290 to 1299 (IFDDDMDDIF). Polar residues predominate over residues 1135 to 1145 (IFSTGTGSQSV). The disordered stretch occupies residues 1302 to 1326 (GIQAKTTKPKSRSAQAAPEPRFEHK). The LFa 21 signature appears at 1330–1338 (IFDDPLNAF).

It belongs to the FAM21 family. Component of the WASH core complex also described as WASH regulatory complex (SHRC) composed of WASH (WASHC1, WASH2P or WASH3P), WASHC2 (WASHC2A or WASHC2C), WASHC3, WASHC4 and WASHC5; in the complex interacts (via N-terminus) directly with WASHC1. The WASH core complex associates with the F-actin-capping protein dimer (formed by CAPZA1, CAPZA2 or CAPZA3 and CAPZB) in a transient or substoichiometric manner which was initially described as WASH complex. Interacts with VPS35; mediates the association with the retromer CSC complex. Interacts with FKBP15. Interacts with CCDC93, CCDC22, VPS35L; indicative for an association of the WASH core complex with the CCC and retriever complexes. Directly interacts with TBC1D23.

The protein resides in the early endosome membrane. It is found in the cell membrane. Its function is as follows. Acts at least in part as component of the WASH core complex whose assembly at the surface of endosomes inhibits WASH nucleation-promoting factor (NPF) activity in recruiting and activating the Arp2/3 complex to induce actin polymerization and is involved in the fission of tubules that serve as transport intermediates during endosome sorting. Mediates the recruitment of the WASH core complex to endosome membranes via binding to phospholipids and VPS35 of the retromer CSC. Mediates the recruitment of the F-actin-capping protein dimer to the WASH core complex probably promoting localized F-actin polymerization needed for vesicle scission. Via its C-terminus binds various phospholipids, most strongly phosphatidylinositol 4-phosphate (PtdIns-(4)P), phosphatidylinositol 5-phosphate (PtdIns-(5)P) and phosphatidylinositol 3,5-bisphosphate (PtdIns-(3,5)P2). Involved in the endosome-to-plasma membrane trafficking and recycling of SNX27-retromer-dependent cargo proteins, such as GLUT1. Required for the association of DNAJC13, ENTR1, ANKRD50 with retromer CSC subunit VPS35. Required for the endosomal recruitment of CCC complex subunits COMMD1 and CCDC93 as well as the retriever complex subunit VPS35L. In Homo sapiens (Human), this protein is WASH complex subunit 2A.